The primary structure comprises 246 residues: Probable transcriptional regulatory protein CGSHiEE_01480 (246 aa).

Belongs to the TACO1 family.

It localises to the cytoplasm. The sequence is that of Probable transcriptional regulatory protein CGSHiEE_01480 from Haemophilus influenzae (strain PittEE).